Here is a 916-residue protein sequence, read N- to C-terminus: Protein O-GlcNAcase (916 aa).

Positions 1-46 (MVQKESQAALEERESERNANPAAASGASLEQSVAPAPGEDNPSGAG) are disordered. One can recognise a GH84 domain in the interval 60 to 336 (FLCGVVEGFY…TLATWYKSNM (277 aa)). Residues G67, K98, and D174 each contribute to the a protein site. D175 functions as the Proton donor in the catalytic mechanism. Residues Y219, 278 to 280 (WDN), D285, and N313 contribute to the a protein site. S364 is modified (phosphoserine). The segment at 443 to 465 (ALSGEPSVLTKEEEKKQPDEEPM) is disordered. Positions 452-461 (TKEEEKKQPD) are enriched in basic and acidic residues.

Belongs to the glycosyl hydrolase 84 family. In terms of assembly, monomer. Interacts with CLOCK. Post-translationally, proteolytically cleaved by caspase-3 during apoptosis. The fragments interact with each other; cleavage does not decrease enzyme activity.

It is found in the cytoplasm. The protein localises to the nucleus. It carries out the reaction 3-O-(N-acetyl-beta-D-glucosaminyl)-L-seryl-[protein] + H2O = N-acetyl-D-glucosamine + L-seryl-[protein]. It catalyses the reaction 3-O-(N-acetyl-beta-D-glucosaminyl)-L-threonyl-[protein] + H2O = L-threonyl-[protein] + N-acetyl-D-glucosamine. In terms of biological role, cleaves GlcNAc but not GalNAc from O-glycosylated proteins. Deglycosylates a large and diverse number of proteins, such as CRYAB, ELK1, GSDMD, LMNB1 and TAB1. Can use p-nitrophenyl-beta-GlcNAc and 4-methylumbelliferone-GlcNAc as substrates but not p-nitrophenyl-beta-GalNAc or p-nitrophenyl-alpha-GlcNAc (in vitro). Does not bind acetyl-CoA and does not have histone acetyltransferase activity. In Mus musculus (Mouse), this protein is Protein O-GlcNAcase.